Here is an 82-residue protein sequence, read N- to C-terminus: M-zodatoxin-Lt3a (82 aa).

Positions 1–22 (MKTYAVLLALVVAFVCIAESTG) are cleaved as a signal peptide. The propeptide occupies 23 to 61 (YPVEDLEDDELTELEAEALLEDLLEDLELEDLDYNEEAR). The Processing quadruplet motif signature appears at 58 to 61 (EEAR). Alanine amide is present on alanine 81.

Belongs to the cationic peptide 03 (latarcin) family. 03 subfamily. Post-translationally, cleavage of the propeptide depends on the processing quadruplet motif (XXXR, with at least one of X being E). Expressed by the venom gland.

Its subcellular location is the secreted. The protein resides in the target cell membrane. Its function is as follows. It has antimicrobial activity against Gram-positive bacteria (A.globiformis VKM Ac-1112 (MIC=0.3 uM), and B.subtilis VKM B-501 (MIC=1.2 uM)), Gram-negative bacteria (E.coli DH5-alpha (MIC=2.5 uM), E.coli MH1 (MIC=6.0 uM), and P.aeruginosa PAO1 (MIC&gt;40 uM)), and yeasts (P.pastoris GS115 (MIC=20 uM), and S.cerevisiae Y190 (MIC=20 uM)). Causes paralysis, but is not lethal when injected into insect (M.domestica) larvae. A second study reports antibacterial activity against E.coli (MIC=100 uM) and S.aureus (MIC=84 uM). Furthermore, increases efficacy of antibiotics (chloramphenicol, streptomycin, kanamycin, novobiocin) when tested against E.coli, probably by facilitating their incorporation into the bacteria. This chain is M-zodatoxin-Lt3a, found in Lachesana tarabaevi (Spider).